Consider the following 213-residue polypeptide: Thiamine-phosphate synthase (213 aa).

4-amino-2-methyl-5-(diphosphooxymethyl)pyrimidine-binding positions include 40–44 (QFREK) and N75. 2 residues coordinate Mg(2+): D76 and D95. A 4-amino-2-methyl-5-(diphosphooxymethyl)pyrimidine-binding site is contributed by S113. Position 139–141 (139–141 (TPS)) interacts with 2-[(2R,5Z)-2-carboxy-4-methylthiazol-5(2H)-ylidene]ethyl phosphate. K142 serves as a coordination point for 4-amino-2-methyl-5-(diphosphooxymethyl)pyrimidine. 2-[(2R,5Z)-2-carboxy-4-methylthiazol-5(2H)-ylidene]ethyl phosphate-binding positions include G171 and 191-192 (IS).

Belongs to the thiamine-phosphate synthase family. Mg(2+) serves as cofactor.

It catalyses the reaction 2-[(2R,5Z)-2-carboxy-4-methylthiazol-5(2H)-ylidene]ethyl phosphate + 4-amino-2-methyl-5-(diphosphooxymethyl)pyrimidine + 2 H(+) = thiamine phosphate + CO2 + diphosphate. The enzyme catalyses 2-(2-carboxy-4-methylthiazol-5-yl)ethyl phosphate + 4-amino-2-methyl-5-(diphosphooxymethyl)pyrimidine + 2 H(+) = thiamine phosphate + CO2 + diphosphate. It carries out the reaction 4-methyl-5-(2-phosphooxyethyl)-thiazole + 4-amino-2-methyl-5-(diphosphooxymethyl)pyrimidine + H(+) = thiamine phosphate + diphosphate. The protein operates within cofactor biosynthesis; thiamine diphosphate biosynthesis; thiamine phosphate from 4-amino-2-methyl-5-diphosphomethylpyrimidine and 4-methyl-5-(2-phosphoethyl)-thiazole: step 1/1. Its function is as follows. Condenses 4-methyl-5-(beta-hydroxyethyl)thiazole monophosphate (THZ-P) and 2-methyl-4-amino-5-hydroxymethyl pyrimidine pyrophosphate (HMP-PP) to form thiamine monophosphate (TMP). This is Thiamine-phosphate synthase from Staphylococcus aureus (strain MRSA252).